The sequence spans 192 residues: Small ribosomal subunit protein uS5 (192 aa).

Positions 20-83 constitute an S5 DRBM domain; that stretch reads FVDKLVHINR…EAAKRGLIRV (64 aa). The interval 162-192 is disordered; it reads SVAARRGLKVSALQARRRDADPADTSDAAVA.

This sequence belongs to the universal ribosomal protein uS5 family. As to quaternary structure, part of the 30S ribosomal subunit. Contacts proteins S4 and S8.

With S4 and S12 plays an important role in translational accuracy. In terms of biological role, located at the back of the 30S subunit body where it stabilizes the conformation of the head with respect to the body. The chain is Small ribosomal subunit protein uS5 from Methylorubrum populi (strain ATCC BAA-705 / NCIMB 13946 / BJ001) (Methylobacterium populi).